The chain runs to 367 residues: MASSGGELGSLFDHHVQRAVCDTRAKYREGRRPRAVKVYTINLESQYLLIQGVPAVGVMKELVERFALYGAIEQYNALDEYPAEDFTEVYLIKFMNLQSARTAKRKMDEQSFFGGLLHVCYAPEFETVEETRKKLQMRKAYVVKTTENKDHYVTKKKLVTEHKDTEDFRQDFHSEMSGFCKAALNTSAGNSNPYLPYSCELPLCYFSSKCMCSSGGPVDRAPDSSKDGRNHHKTMGHYNHNDSLRKTQINSLKNSVACPGAQKAITSSEAVDRFMPRTTQLQERKRRREDDRKLGTFLQTNPTGNEIMIGPLLPDISKVDMHDDSLNTTANLIRHKLKEVISSVPKPPEDKPEDVHTSHPLKQRRRI.

Positions 46-124 (QYLLIQGVPA…GLLHVCYAPE (79 aa)) constitute an RRM domain. 3 disordered regions span residues 217–243 (PVDR…HNDS), 280–302 (QLQE…QTNP), and 343–367 (SVPK…RRRI). Residues 347-357 (PPEDKPEDVHT) show a composition bias toward basic and acidic residues.

The protein belongs to the RBM48 family. In terms of assembly, component of the minor spliceosome. Within this complex, interacts with ARMC7 and PRPF8/PRP8.

Its function is as follows. As a component of the minor spliceosome, involved in the splicing of U12-type introns in pre-mRNAs. This chain is RNA-binding protein 48 (RBM48), found in Homo sapiens (Human).